The sequence spans 591 residues: L-fucose isomerase (591 aa).

Residues Glu-337 and Asp-361 each act as proton acceptor in the active site. Residues Glu-337, Asp-361, and His-528 each coordinate Mn(2+).

It belongs to the L-fucose isomerase family. As to quaternary structure, homohexamer. Mn(2+) serves as cofactor.

It localises to the cytoplasm. The catalysed reaction is L-fucose = L-fuculose. It functions in the pathway carbohydrate degradation; L-fucose degradation; L-lactaldehyde and glycerone phosphate from L-fucose: step 1/3. In terms of biological role, converts the aldose L-fucose into the corresponding ketose L-fuculose. The polypeptide is L-fucose isomerase (Klebsiella pneumoniae subsp. pneumoniae (strain ATCC 700721 / MGH 78578)).